The sequence spans 317 residues: Methionyl-tRNA formyltransferase (317 aa).

Ser-110 to Pro-113 contacts (6S)-5,6,7,8-tetrahydrofolate. Residues Arg-292 to Asn-317 are disordered.

The protein belongs to the Fmt family.

The enzyme catalyses L-methionyl-tRNA(fMet) + (6R)-10-formyltetrahydrofolate = N-formyl-L-methionyl-tRNA(fMet) + (6S)-5,6,7,8-tetrahydrofolate + H(+). In terms of biological role, attaches a formyl group to the free amino group of methionyl-tRNA(fMet). The formyl group appears to play a dual role in the initiator identity of N-formylmethionyl-tRNA by promoting its recognition by IF2 and preventing the misappropriation of this tRNA by the elongation apparatus. The protein is Methionyl-tRNA formyltransferase of Bacillus velezensis (strain DSM 23117 / BGSC 10A6 / LMG 26770 / FZB42) (Bacillus amyloliquefaciens subsp. plantarum).